The following is a 493-amino-acid chain: Isoniazid-induced protein IniC (493 aa).

The chain is Isoniazid-induced protein IniC (iniC) from Mycobacterium tuberculosis (strain CDC 1551 / Oshkosh).